A 401-amino-acid chain; its full sequence is Leucine aminopeptidase 1 (401 aa).

Positions 1 to 18 (MKVAKASLLTILAHSVSA) are cleaved as a signal peptide. Positions 19-87 (RFLAEDEINR…GATRLRTKTK (69 aa)) are excised as a propeptide. Residue N179 is glycosylated (N-linked (GlcNAc...) asparagine). Residues H187, D206, E245, and D272 each coordinate Zn(2+). C321 and C325 form a disulfide bridge. H354 contributes to the Zn(2+) binding site.

Belongs to the peptidase M28 family. M28E subfamily. As to quaternary structure, monomer. It depends on Zn(2+) as a cofactor.

The protein resides in the secreted. Extracellular aminopeptidase that allows assimilation of proteinaceous substrates. The chain is Leucine aminopeptidase 1 (LAP1) from Colletotrichum graminicola (strain M1.001 / M2 / FGSC 10212) (Maize anthracnose fungus).